A 141-amino-acid polypeptide reads, in one-letter code: Hemoglobin subunit alpha (141 aa).

The region spanning 1–141 (VLSGEDKNNI…VSTVLTSKYR (141 aa)) is the Globin domain. At Ser3 the chain carries Phosphoserine. Residues Lys7 and Lys11 each carry the N6-succinyllysine modification. At Lys16 the chain carries N6-acetyllysine; alternate. Lys16 carries the post-translational modification N6-succinyllysine; alternate. The residue at position 24 (Tyr24) is a Phosphotyrosine. Position 40 is an N6-succinyllysine (Lys40). Phosphoserine is present on Ser49. His58 contacts O2. Heme b is bound at residue His87. Ser102 carries the post-translational modification Phosphoserine. Thr108 is subject to Phosphothreonine. Ser124 and Ser131 each carry phosphoserine. Phosphothreonine occurs at positions 134 and 137. Ser138 is modified (phosphoserine).

It belongs to the globin family. As to quaternary structure, heterotetramer of two alpha chains and two beta chains. As to expression, red blood cells.

Involved in oxygen transport from the lung to the various peripheral tissues. Its function is as follows. Hemopressin acts as an antagonist peptide of the cannabinoid receptor CNR1. Hemopressin-binding efficiently blocks cannabinoid receptor CNR1 and subsequent signaling. This Ondatra zibethicus (Muskrat) protein is Hemoglobin subunit alpha (HBA).